Reading from the N-terminus, the 261-residue chain is Histone H3-like centromeric protein cpar-1 (261 aa).

The segment at 80–150 is disordered; sequence TVGSNSTNLV…AGSSSSDRVR (71 aa). Positions 113–127 are enriched in polar residues; the sequence is AANSHHQSPINVGNR. The segment covering 132–146 has biased composition (low complexity); that stretch reads GTNGRNGSRAGSSSS. The H3-like stretch occupies residues 164–261; that stretch reads YRPGQKALEE…LYRRLCLPNL (98 aa).

It belongs to the histone H3 family. Forms a nucleosome-like histone octamer containing two molecules each of H2A, H2B, cpar-1 and H4 assembled in one cpar-1-H4 heterotetramer and two H2A-H2B heterodimers. In terms of processing, cleaved at the onset of meiotic anaphase I, likely by separase sep-1.

The protein resides in the nucleus. It is found in the chromosome. Its function is as follows. Histone H3-like variant which exclusively replaces conventional H3 in the nucleosome core of centromeric chromatin at the inner plate of the kinetochore. Required for recruitment and assembly of kinetochore proteins, mitotic progression and chromosome segregation. May serve as an epigenetic mark that propagates centromere identity through replication and cell division. Not required for chromosome segregation during meiosis. The protein is Histone H3-like centromeric protein cpar-1 of Caenorhabditis elegans.